The sequence spans 361 residues: Blue-sensitive opsin (361 aa).

Residues 1 to 43 (MHPPRPTTDLPEDFYIPMALDAPNITALSPFLVPQTHLGSPGL) lie on the Extracellular side of the membrane. N-linked (GlcNAc...) asparagine glycosylation occurs at asparagine 24. A helical transmembrane segment spans residues 44–68 (FRAMAAFMFLLIALGVPINTLTIFC). Over 69–80 (TARFRKLRSHLN) the chain is Cytoplasmic. A helical transmembrane segment spans residues 81 to 106 (YILVNLALANLLVILVGSTTACYSFS). Over 107–120 (QMYFALGPTACKIE) the chain is Extracellular. A disulfide bond links cysteine 117 and cysteine 194. Residues 121-140 (GFAATLGGMVSLWSLAVVAF) form a helical membrane-spanning segment. The Cytoplasmic portion of the chain corresponds to 141–159 (ERFLVICKPLGNFTFRGSH). A helical transmembrane segment spans residues 160–183 (AVLGCVATWVLGFVASAPPLFGWS). The Extracellular segment spans residues 184 to 209 (RYIPEGLQCSCGPDWYTTDNKWHNES). The helical transmembrane segment at 210 to 237 (YVLFLFTFCFGVPLAIIVFSYGRLLITL) threads the bilayer. Topologically, residues 238–259 (RAVARQQEQSATTQKADREVTK) are cytoplasmic. A helical membrane pass occupies residues 260-283 (MVVVMVLGFLVCWAPYTAFALWVV). Topologically, residues 284–291 (THRGRSFE) are extracellular. A helical membrane pass occupies residues 292–316 (VGLASIPSVFSKSSTVYNPVIYVLM). Lysine 303 carries the N6-(retinylidene)lysine modification. Residues 317 to 361 (NKQFRSCMLKLLFCGRSPFGDDEDVSGSSQATQVSSVSSSHVAPA) are Cytoplasmic-facing. The tract at residues 338 to 361 (DEDVSGSSQATQVSSVSSSHVAPA) is disordered. Residues 342 to 361 (SGSSQATQVSSVSSSHVAPA) are compositionally biased toward low complexity.

It belongs to the G-protein coupled receptor 1 family. Opsin subfamily. In terms of processing, phosphorylated on some or all of the serine and threonine residues present in the C-terminal region. As to expression, the color pigments are found in the cone photoreceptor cells.

It localises to the membrane. Visual pigments are the light-absorbing molecules that mediate vision. They consist of an apoprotein, opsin, covalently linked to cis-retinal. The chain is Blue-sensitive opsin from Gallus gallus (Chicken).